The sequence spans 418 residues: Histidine--tRNA ligase (418 aa).

Belongs to the class-II aminoacyl-tRNA synthetase family. As to quaternary structure, homodimer.

It is found in the cytoplasm. It carries out the reaction tRNA(His) + L-histidine + ATP = L-histidyl-tRNA(His) + AMP + diphosphate + H(+). This is Histidine--tRNA ligase from Thermoanaerobacter pseudethanolicus (strain ATCC 33223 / 39E) (Clostridium thermohydrosulfuricum).